Consider the following 290-residue polypeptide: UBX domain-containing protein 1-B (290 aa).

A UBA domain is found at 1 to 42 (MADCSALESLIEMGFSPSRAEKALSATGNQGIEPAMDWLVEH). A disordered region spans residues 49–210 (KEPSVVIPED…VQEPPTKKEY (162 aa)). Composition is skewed to basic and acidic residues over residues 80-117 (PLTEEEKEKQTKRMMELIAQKQKEREEREKRERIEQEK) and 132-172 (RMQE…DRAR). The stretch at 81–171 (LTEEEKEKQT…KIARDKADRA (91 aa)) forms a coiled coil. Low complexity predominate over residues 185–201 (PAETSVPATAPSPSSPV). The UBX domain maps to 208–287 (KEYDQCRIQV…GLVPTAVLIV (80 aa)).

The protein localises to the cytoplasm. Functionally, component of a complex required to couple deglycosylation and proteasome-mediated degradation of misfolded proteins in the endoplasmic reticulum that are retrotranslocated in the cytosol. Involved in ubiquitin-proteasome systems. The protein is UBX domain-containing protein 1-B (ubxn1-b) of Xenopus laevis (African clawed frog).